Here is a 142-residue protein sequence, read N- to C-terminus: Probable transport accessory protein MmpS1 (142 aa).

2 helical membrane passes run 8–28 (FWIP…VSRL) and 81–101 (VVNA…AVVA).

The protein belongs to the MmpS family.

It localises to the cell membrane. The polypeptide is Probable transport accessory protein MmpS1 (mmpS1) (Mycobacterium bovis (strain ATCC BAA-935 / AF2122/97)).